We begin with the raw amino-acid sequence, 170 residues long: MAVSKQVIATEAITRKVDLDNPKVVAKLKKNMGHMTYGEPAWPNDLLFMFPVVILGTIGVIVGLSVMDPAGVGEPADPFATPLEILPEWYLYPAFHILRIAPNKLLGIALMSAIPVGLLFVPFIENVNKFQNPLRRPVATTVFLIGTLVTLYLGIGATLPLDKWVTLGLF.

3 helical membrane-spanning segments follow: residues 46 to 66 (LLFM…GLSV), 105 to 125 (LLGI…PFIE), and 141 to 161 (TVFL…TLPL).

It belongs to the cytochrome b family. PetD subfamily. The 4 large subunits of the cytochrome b6-f complex are cytochrome b6, subunit IV (17 kDa polypeptide, PetD), cytochrome f and the Rieske protein, while the 4 small subunits are PetG, PetL, PetM and PetN. The complex functions as a dimer.

It localises to the cellular thylakoid membrane. In terms of biological role, component of the cytochrome b6-f complex, which mediates electron transfer between photosystem II (PSII) and photosystem I (PSI), cyclic electron flow around PSI, and state transitions. The polypeptide is Cytochrome b6-f complex subunit 4 (Synechococcus sp. (strain JA-2-3B'a(2-13)) (Cyanobacteria bacterium Yellowstone B-Prime)).